The following is a 336-amino-acid chain: MNPNFTTEHTWQGRHDPEDGQAGRRVHHIACPIQVGELANQEPGVALIGFECDAGVERNKGRTGAKHAPSLIKQALANLAWHHPIPIYDLGNIRCEGDELEQAQQECAQVIQQALPHARAIVLGGGHEIAWATFQGLAQHFLATGVKQPRIGIINFDAHFDLRTFESELAPVRPSSGTPFNQIHHFCQQQGWDFHYACLGVSRASNTPALFERADKLGVWYVEDKAFSPLSLKDHLTQLQHFIDDCDYLYLTIDLDVFPAASAPGVSAPAARGVSLEALAPYFDRILHYKNKLMIADIAEYNPSFDIDQHTARLAARLCWDIANAMAEQVQSIRHP.

Over residues 1–10 (MNPNFTTEHT) the composition is skewed to polar residues. The tract at residues 1 to 22 (MNPNFTTEHTWQGRHDPEDGQA) is disordered. Residues 11–22 (WQGRHDPEDGQA) show a composition bias toward basic and acidic residues. 6 residues coordinate Mn(2+): His127, Asp157, His159, Asp161, Asp254, and Asp256.

Belongs to the arginase family. Mn(2+) serves as cofactor.

The catalysed reaction is N-formimidoyl-L-glutamate + H2O = formamide + L-glutamate. It functions in the pathway amino-acid degradation; L-histidine degradation into L-glutamate; L-glutamate from N-formimidoyl-L-glutamate (hydrolase route): step 1/1. Functionally, catalyzes the conversion of N-formimidoyl-L-glutamate to L-glutamate and formamide. In Vibrio cholerae serotype O1 (strain ATCC 39541 / Classical Ogawa 395 / O395), this protein is Formimidoylglutamase.